The primary structure comprises 482 residues: UDP-N-acetylmuramoyl-L-alanyl-D-glutamate--2,6-diaminopimelate ligase (482 aa).

2 residues coordinate UDP-N-acetyl-alpha-D-muramoyl-L-alanyl-D-glutamate: L28 and S30. 108–114 contacts ATP; it reads GTNGKTT. Residues 150–151, S177, Q183, and R185 each bind UDP-N-acetyl-alpha-D-muramoyl-L-alanyl-D-glutamate; that span reads TT. N6-carboxylysine is present on K217. Meso-2,6-diaminopimelate is bound by residues R372, 396 to 399, G447, and E451; that span reads DNPR. Residues 396–399 carry the Meso-diaminopimelate recognition motif motif; sequence DNPR.

It belongs to the MurCDEF family. MurE subfamily. It depends on Mg(2+) as a cofactor. Post-translationally, carboxylation is probably crucial for Mg(2+) binding and, consequently, for the gamma-phosphate positioning of ATP.

Its subcellular location is the cytoplasm. It catalyses the reaction UDP-N-acetyl-alpha-D-muramoyl-L-alanyl-D-glutamate + meso-2,6-diaminopimelate + ATP = UDP-N-acetyl-alpha-D-muramoyl-L-alanyl-gamma-D-glutamyl-meso-2,6-diaminopimelate + ADP + phosphate + H(+). It participates in cell wall biogenesis; peptidoglycan biosynthesis. In terms of biological role, catalyzes the addition of meso-diaminopimelic acid to the nucleotide precursor UDP-N-acetylmuramoyl-L-alanyl-D-glutamate (UMAG) in the biosynthesis of bacterial cell-wall peptidoglycan. This Aquifex aeolicus (strain VF5) protein is UDP-N-acetylmuramoyl-L-alanyl-D-glutamate--2,6-diaminopimelate ligase.